Reading from the N-terminus, the 442-residue chain is uncharacterized protein (442 aa).

A disordered region spans residues 211 to 269 (LDYSTDKPEDSESEDIELEDSESEDSESEDIDQHGGQGPDDDEFNANFDDPQFDEFDFG). A compositionally biased stretch (acidic residues) spans 221–240 (SESEDIELEDSESEDSESED).

It localises to the virion. This is an uncharacterized protein from Acanthamoeba polyphaga (Amoeba).